The primary structure comprises 496 residues: Cytosol aminopeptidase (496 aa).

The Mn(2+) site is built by Lys-258 and Asp-263. Lys-270 is a catalytic residue. Asp-281, Asp-340, and Glu-342 together coordinate Mn(2+). Residue Arg-344 is part of the active site.

Belongs to the peptidase M17 family. Mn(2+) serves as cofactor.

The protein localises to the cytoplasm. It carries out the reaction Release of an N-terminal amino acid, Xaa-|-Yaa-, in which Xaa is preferably Leu, but may be other amino acids including Pro although not Arg or Lys, and Yaa may be Pro. Amino acid amides and methyl esters are also readily hydrolyzed, but rates on arylamides are exceedingly low.. The catalysed reaction is Release of an N-terminal amino acid, preferentially leucine, but not glutamic or aspartic acids.. Functionally, presumably involved in the processing and regular turnover of intracellular proteins. Catalyzes the removal of unsubstituted N-terminal amino acids from various peptides. This chain is Cytosol aminopeptidase (pepA), found in Helicobacter pylori (strain J99 / ATCC 700824) (Campylobacter pylori J99).